A 1202-amino-acid polypeptide reads, in one-letter code: Metabotropic glycine receptor (1202 aa).

Residues 1–24 (MGAMAYSLLLCLLLAHLGLGEVGA) form the signal peptide. Positions 25–62 (SLDPSERPDSSRERTSRGKQHGQQLPRASAPDPSIPWS) are disordered. Residues 25 to 417 (SLDPSERPDS…CFVQEDKYLR (393 aa)) are Extracellular-facing. The span at 28-40 (PSERPDSSRERTS) shows a compositional bias: basic and acidic residues. Residues 85 to 281 (YLYTGDFHQL…CENGSYKPGW (197 aa)) form a cache-like region region. 2 N-linked (GlcNAc...) asparagine glycosylation sites follow: Asn-98 and Asn-143. Cys-99 and Cys-272 are joined by a disulfide. 2 residues coordinate glycine: Ser-172 and Arg-173. Asn-215 carries N-linked (GlcNAc...) asparagine glycosylation. The segment at 234 to 253 (LHRRGSNQGPRGLGHSWRRR) is disordered. Glu-271 serves as a coordination point for glycine. Asn-274 is a glycosylation site (N-linked (GlcNAc...) asparagine). Asp-307 serves as a coordination point for glycine. The N-linked (GlcNAc...) asparagine glycan is linked to Asn-333. The helical transmembrane segment at 418-439 (LAIISFQALCMLLDFVSMLVVY) threads the bilayer. The Cytoplasmic segment spans residues 440–451 (HFRKAKSIRASG). Residues 452-474 (LILLETILFGSLLLYFPVVILYF) traverse the membrane as a helical segment. Topologically, residues 475-478 (EPST) are extracellular. Residues 479-501 (FRCILLRWVRLLGFATVYGTVTL) form a helical membrane-spanning segment. Cys-481 and Cys-573 are joined by a disulfide. Residues 502–525 (KLHRVLKVFLSRTAQRIPYMTGGR) are Cytoplasmic-facing. The chain crosses the membrane as a helical span at residues 526–547 (VMRMLAVIVLVVFWFLVGWTSS). The Extracellular portion of the chain corresponds to 548-576 (MCQNLERDILLVGQGQTSDNLTFNMCLID). The helical transmembrane segment at 577 to 597 (RWDYMTAVAEFLFLLWGIYLC) threads the bilayer. The Cytoplasmic segment spans residues 598–611 (YAVRTVPSAFHEPR). The helical transmembrane segment at 612-633 (YMAVAVHNELIITAIFHTIRFV) threads the bilayer. The Extracellular portion of the chain corresponds to 634 to 642 (LASRLQPDW). Residues 643 to 664 (MLMLYFAHTHLTVTVTIGLLLI) form a helical membrane-spanning segment. Over 665–1202 (PKFSHSSNNP…SASKIPGPRK (538 aa)) the chain is Cytoplasmic. 3 positions are modified to phosphoserine: Ser-694, Ser-705, and Ser-708. Disordered stretches follow at residues 757-899 (RITE…TSML) and 914-995 (LGLA…QIKD). 2 stretches are compositionally biased toward basic and acidic residues: residues 769 to 781 (CSKE…DHSA) and 819 to 828 (STYDHVRDQT). Lys-774 is covalently cross-linked (Glycyl lysine isopeptide (Lys-Gly) (interchain with G-Cter in ubiquitin)). Residues 845–856 (ENSTLESLSSKK) show a composition bias toward low complexity. Ser-865 bears the Phosphoserine mark. Basic and acidic residues predominate over residues 925 to 943 (MEDRAKSQKPQPKDRETNR). 2 stretches are compositionally biased toward polar residues: residues 944–958 (KYSN…PNSN) and 975–994 (QRVN…TQIK). Ser-946 carries the phosphoserine modification. Positions 1002–1006 (VCPWE) match the VCPWE motif 1 motif. Ser-1061 carries the phosphoserine modification. The VCPWE motif 2 motif lies at 1067-1071 (VCPWE). Phosphoserine is present on Ser-1076. Composition is skewed to polar residues over residues 1132 to 1144 (QMGD…SSSV) and 1151 to 1162 (CISSNNSPQPLT). The tract at residues 1132-1162 (QMGDQEKQTSSSVDIIPGSCISSNNSPQPLT) is disordered. Positions 1167-1171 (VCPWE) match the VCPWE motif 3 motif.

The protein belongs to the G-protein coupled receptor 3 family. As to quaternary structure, homodimer. Associates with the RGS7-GNB5 complex, promoting its localization to the cell membrane and regulating its GTPase activator activity. Interacts (via VCPWE motifs) with GNAO1. Interacts with GPC4. Interacts with EGFLAM.

It is found in the cell membrane. The protein resides in the postsynaptic cell membrane. It localises to the presynaptic cell membrane. The protein localises to the nucleus. In terms of biological role, metabotropic receptor for glycine that controls synapse formation and function in the brain. Acts as an atypical G-protein coupled receptor that recruits and regulates the RGS7-GNB5 complex instead of activating G proteins. In absence of glycine ligand, promotes the GTPase activator activity of RGS7, increasing the GTPase activity of G protein alpha subunits, thereby driving them into their inactive GDP-bound form. Glycine-binding changes the conformation of the intracellular surface, inhibiting the GTPase activator activity of the RGS7-GNB5 complex, promoting G protein alpha subunits into their active GTP-bound form and regulating cAMP levels. Also able to bind taurine, a compound closely related to glycine, but with a two-fold lower affinity. Glycine receptor-dependent regulation of cAMP controls key ion channels, kinases and neurotrophic factors involved in neuronal excitability and synaptic transmission. Plays a pivotal role in regulating mood and cognition via its ability to regulate neuronal excitability in L2/L3 pyramidal neurons of the prefrontal cortex. Also involved in spatial learning by regulating hippocampal CA1 neuronal excitability. Acts as a synaptic organizer in the hippocampus, required for proper mossy fiber-CA3 neurocircuitry establishment, structure and function: induces presynaptic differentiation in contacting axons via its interaction with GPC4. In addition to glycine, may also act as a receptor for osteocalcin (BGLAP) hormone: osteocalcin-binding initiates a signaling response that prevents neuronal apoptosis in the hippocampus and regulates the synthesis of neurotransmitters. The polypeptide is Metabotropic glycine receptor (Rattus norvegicus (Rat)).